The following is a 524-amino-acid chain: 3-epi-6-deoxocathasterone 23-monooxygenase CYP90C1 (524 aa).

Residues 25-45 (YLVAGFLVLTAGILLRPWLWL) traverse the membrane as a helical segment. Residue C463 participates in heme binding.

Belongs to the cytochrome P450 family. Heme serves as cofactor. Widely expressed.

It localises to the endoplasmic reticulum membrane. The catalysed reaction is 3-epi-6-deoxocathasterone + reduced [NADPH--hemoprotein reductase] + O2 = 6-deoxotyphasterol + oxidized [NADPH--hemoprotein reductase] + H2O + H(+). It carries out the reaction (22S,24R)-22-hydroxy-5alpha-ergostan-3-one + reduced [NADPH--hemoprotein reductase] + O2 = 3-dehydro-6-deoxoteasterone + oxidized [NADPH--hemoprotein reductase] + H2O + H(+). Its pathway is plant hormone biosynthesis; brassinosteroid biosynthesis. Functionally, involved in brassinosteroid (BR) biosynthesis. Converts typhasterol (TY) to cathasterone (CS) and 6-deoxotyphasterol (6-deoxoTY) to 6-deoxocathasterone (6-deoxoCT). C-23 hydroxylase that converts directly (22S,24R)-22-hydroxy-5-alpha-ergostan-3-one and 3-epi-6-deoxocathasterone to 3-dehydro-6-deoxoteasterone (6-deoxo3DT, 6-deoxo3DHT) and 6-deoxotyphasterol (6-deoxoTY), respectively. These C-23 hydroxylation shortcuts bypass campestanol, 6-deoxocathasterone, and 6-deoxoteasterone (6-deoxoTE). Also catalyzes the conversion of cathasterone to teasterone (TE), (22S,24R)-22-hydroxyergost-4-en-3-one (22-OH-4-en-3-one) to (22R,23R)-22,23-dihydroxy-campest-4-en-3-one (22,23-diOH-4-en-3-one) and (22S)-22-hydroxycampesterol (22-OHCR) to (22R,23R)-22,23-dihydroxycampesterol (22,23-diOHCR). Required for the regulation of polar elongation of leaf cells. Required for the longitudinal elongation of floral organs. This chain is 3-epi-6-deoxocathasterone 23-monooxygenase CYP90C1, found in Arabidopsis thaliana (Mouse-ear cress).